The following is a 156-amino-acid chain: Small ribosomal subunit protein uS7c (156 aa).

Belongs to the universal ribosomal protein uS7 family. Part of the 30S ribosomal subunit.

The protein localises to the plastid. The protein resides in the chloroplast. Its function is as follows. One of the primary rRNA binding proteins, it binds directly to 16S rRNA where it nucleates assembly of the head domain of the 30S subunit. This Chlorella vulgaris (Green alga) protein is Small ribosomal subunit protein uS7c (rps7).